The primary structure comprises 315 residues: Methionyl-tRNA formyltransferase (315 aa).

A (6S)-5,6,7,8-tetrahydrofolate-binding site is contributed by 107-110; sequence SLLP.

It belongs to the Fmt family.

It catalyses the reaction L-methionyl-tRNA(fMet) + (6R)-10-formyltetrahydrofolate = N-formyl-L-methionyl-tRNA(fMet) + (6S)-5,6,7,8-tetrahydrofolate + H(+). Attaches a formyl group to the free amino group of methionyl-tRNA(fMet). The formyl group appears to play a dual role in the initiator identity of N-formylmethionyl-tRNA by promoting its recognition by IF2 and preventing the misappropriation of this tRNA by the elongation apparatus. The sequence is that of Methionyl-tRNA formyltransferase from Borrelia garinii subsp. bavariensis (strain ATCC BAA-2496 / DSM 23469 / PBi) (Borreliella bavariensis).